The sequence spans 240 residues: tRNA (guanine-N(7)-)-methyltransferase (240 aa).

Positions 71, 96, 123, and 146 each coordinate S-adenosyl-L-methionine. Residue Asp-146 is part of the active site. Substrate is bound by residues Lys-150, Asp-182, and 219 to 222 (TKFE).

The protein belongs to the class I-like SAM-binding methyltransferase superfamily. TrmB family.

It catalyses the reaction guanosine(46) in tRNA + S-adenosyl-L-methionine = N(7)-methylguanosine(46) in tRNA + S-adenosyl-L-homocysteine. Its pathway is tRNA modification; N(7)-methylguanine-tRNA biosynthesis. Catalyzes the formation of N(7)-methylguanine at position 46 (m7G46) in tRNA. This chain is tRNA (guanine-N(7)-)-methyltransferase, found in Hydrogenovibrio crunogenus (strain DSM 25203 / XCL-2) (Thiomicrospira crunogena).